The sequence spans 287 residues: MSAQVINGKVVAKTVIDRVKQRVQLRKSQGLRAPGLAVILIGDDPASSVYVNNKKKACEEAGLVSKSWNWPSKATQYELLELIKQLNEDTSIDGILVQLPLPDHIDAETIIEAIHPDKDVDGFHPYNIGRLTVRMPTLRPCTPYGCMNLLNHYDLSVKGKHAVIVGASNIVGRPMSLELLLAGATTTVCHRFTADLQTHVSMADILVTAVGKPNFIPADWIKPGAIVVDVGINRLPDGSLTGDVDPRAREVAAYVTPVPGGVGPMTIATLLENTLKACEIHQLGAVS.

NADP(+)-binding positions include 166-168 (GAS) and I232.

Belongs to the tetrahydrofolate dehydrogenase/cyclohydrolase family. In terms of assembly, homodimer.

It carries out the reaction (6R)-5,10-methylene-5,6,7,8-tetrahydrofolate + NADP(+) = (6R)-5,10-methenyltetrahydrofolate + NADPH. It catalyses the reaction (6R)-5,10-methenyltetrahydrofolate + H2O = (6R)-10-formyltetrahydrofolate + H(+). Its pathway is one-carbon metabolism; tetrahydrofolate interconversion. Catalyzes the oxidation of 5,10-methylenetetrahydrofolate to 5,10-methenyltetrahydrofolate and then the hydrolysis of 5,10-methenyltetrahydrofolate to 10-formyltetrahydrofolate. The sequence is that of Bifunctional protein FolD 2 from Hydrogenovibrio crunogenus (strain DSM 25203 / XCL-2) (Thiomicrospira crunogena).